Consider the following 441-residue polypeptide: Ribosomal protein uS12 methylthiotransferase RimO (441 aa).

In terms of domain architecture, MTTase N-terminal spans 8-118 (PKIGFVSLGC…VLQHVHHYVP (111 aa)). [4Fe-4S] cluster-binding residues include Cys-17, Cys-53, Cys-82, Cys-150, Cys-154, and Cys-157. Positions 136-373 (LTPRHYAYLK…MQLQQQISAE (238 aa)) constitute a Radical SAM core domain. Residues 376–441 (QEKVGREILV…DEYDLWGSRV (66 aa)) form the TRAM domain.

It belongs to the methylthiotransferase family. RimO subfamily. Requires [4Fe-4S] cluster as cofactor.

Its subcellular location is the cytoplasm. The enzyme catalyses L-aspartate(89)-[ribosomal protein uS12]-hydrogen + (sulfur carrier)-SH + AH2 + 2 S-adenosyl-L-methionine = 3-methylsulfanyl-L-aspartate(89)-[ribosomal protein uS12]-hydrogen + (sulfur carrier)-H + 5'-deoxyadenosine + L-methionine + A + S-adenosyl-L-homocysteine + 2 H(+). Functionally, catalyzes the methylthiolation of an aspartic acid residue of ribosomal protein uS12. This is Ribosomal protein uS12 methylthiotransferase RimO from Salmonella arizonae (strain ATCC BAA-731 / CDC346-86 / RSK2980).